The sequence spans 241 residues: Ribonuclease HII (241 aa).

Residues 57–241 (NFIAGVDEAG…RTYVEKILKG (185 aa)) form the RNase H type-2 domain. A divalent metal cation-binding residues include Asp-63, Glu-64, and Asp-155.

It belongs to the RNase HII family. Requires Mn(2+) as cofactor. The cofactor is Mg(2+).

It localises to the cytoplasm. The enzyme catalyses Endonucleolytic cleavage to 5'-phosphomonoester.. In terms of biological role, endonuclease that specifically degrades the RNA of RNA-DNA hybrids. The sequence is that of Ribonuclease HII from Caldanaerobacter subterraneus subsp. tengcongensis (strain DSM 15242 / JCM 11007 / NBRC 100824 / MB4) (Thermoanaerobacter tengcongensis).